Consider the following 380-residue polypeptide: Cytochrome b (380 aa).

4 helical membrane-spanning segments follow: residues 34-54, 78-99, 114-134, and 179-199; these read FGSLLGICLVTQILTGLLLAM, WLIRNLHANGASLFFICIYMHI, WNTGIILLLTLMATAFVGYVL, and FFALHFLLPFLIAGLTLIHLT. Heme b-binding residues include histidine 84 and histidine 98. 2 residues coordinate heme b: histidine 183 and histidine 197. An a ubiquinone-binding site is contributed by histidine 202. Transmembrane regions (helical) follow at residues 227–247, 289–309, 321–341, and 348–368; these read SKDILGFMLLYFLLTTLALFS, LGGVLALAASILILFLSPFLH, LSQMLFWLLVTNLLILTWIGS, and FIIIGQLASLTYFTILLILLP.

Belongs to the cytochrome b family. In terms of assembly, the cytochrome bc1 complex contains 11 subunits: 3 respiratory subunits (MT-CYB, CYC1 and UQCRFS1), 2 core proteins (UQCRC1 and UQCRC2) and 6 low-molecular weight proteins (UQCRH/QCR6, UQCRB/QCR7, UQCRQ/QCR8, UQCR10/QCR9, UQCR11/QCR10 and a cleavage product of UQCRFS1). This cytochrome bc1 complex then forms a dimer. The cofactor is heme b.

It is found in the mitochondrion inner membrane. Component of the ubiquinol-cytochrome c reductase complex (complex III or cytochrome b-c1 complex) that is part of the mitochondrial respiratory chain. The b-c1 complex mediates electron transfer from ubiquinol to cytochrome c. Contributes to the generation of a proton gradient across the mitochondrial membrane that is then used for ATP synthesis. This is Cytochrome b (MT-CYB) from Caracara plancus (Southern caracara).